A 350-amino-acid chain; its full sequence is Methionine import ATP-binding protein MetN (350 aa).

The region spanning 2-241 is the ABC transporter domain; it reads IQIKNLKKEY…PQAPVTRSFV (240 aa). Residue 38–45 coordinates ATP; the sequence is GHSGAGKS.

This sequence belongs to the ABC transporter superfamily. Methionine importer (TC 3.A.1.24) family. In terms of assembly, the complex is composed of two ATP-binding proteins (MetN), two transmembrane proteins (MetI) and a solute-binding protein (MetQ).

Its subcellular location is the cell inner membrane. The catalysed reaction is L-methionine(out) + ATP + H2O = L-methionine(in) + ADP + phosphate + H(+). It catalyses the reaction D-methionine(out) + ATP + H2O = D-methionine(in) + ADP + phosphate + H(+). Functionally, part of the ABC transporter complex MetNIQ involved in methionine import. Responsible for energy coupling to the transport system. This Francisella tularensis subsp. tularensis (strain FSC 198) protein is Methionine import ATP-binding protein MetN.